The primary structure comprises 147 residues: Small ribosomal subunit protein uS5 (147 aa).

In terms of domain architecture, S5 DRBM spans Phe-9–Val-72.

It belongs to the universal ribosomal protein uS5 family. Part of the 30S ribosomal subunit. Contacts proteins S4 and S8.

Functionally, with S4 and S12 plays an important role in translational accuracy. Located at the back of the 30S subunit body where it stabilizes the conformation of the head with respect to the body. The polypeptide is Small ribosomal subunit protein uS5 (Campylobacter concisus (strain 13826)).